The sequence spans 343 residues: Dihydroorotate dehydrogenase (quinone) (343 aa).

Residues 61 to 65 (AGLDK) and Thr85 each bind FMN. Lys65 is a binding site for substrate. 110–114 (NRMGF) is a substrate binding site. Residues Asn138 and Asn171 each coordinate FMN. Asn171 is a substrate binding site. Ser174 acts as the Nucleophile in catalysis. Residue Asn176 coordinates substrate. Residues Lys216 and Thr244 each coordinate FMN. 245–246 (NT) lines the substrate pocket. FMN-binding positions include Gly267, Gly296, and 317 to 318 (YS).

Belongs to the dihydroorotate dehydrogenase family. Type 2 subfamily. Monomer. Requires FMN as cofactor.

It is found in the cell membrane. It catalyses the reaction (S)-dihydroorotate + a quinone = orotate + a quinol. The protein operates within pyrimidine metabolism; UMP biosynthesis via de novo pathway; orotate from (S)-dihydroorotate (quinone route): step 1/1. Functionally, catalyzes the conversion of dihydroorotate to orotate with quinone as electron acceptor. The chain is Dihydroorotate dehydrogenase (quinone) from Pseudomonas syringae pv. tomato (strain ATCC BAA-871 / DC3000).